Reading from the N-terminus, the 38-residue chain is Large ribosomal subunit protein bL36 (38 aa).

This sequence belongs to the bacterial ribosomal protein bL36 family.

This chain is Large ribosomal subunit protein bL36, found in Gemmatimonas aurantiaca (strain DSM 14586 / JCM 11422 / NBRC 100505 / T-27).